We begin with the raw amino-acid sequence, 1749 residues long: E3 ubiquitin-protein ligase UBR1 (1749 aa).

Ala2 carries the N-acetylalanine modification. Phosphothreonine is present on Thr21. The segment at Gln97–Pro168 adopts a UBR-type zinc-finger fold. Zn(2+) is bound by residues Cys99, Cys112, Cys115, Cys124, Cys127, His133, and His136. Phe148 serves as a coordination point for a peptide. Residue Cys149 coordinates Zn(2+). Residue Asp150 participates in a peptide binding. Cys151 contacts Zn(2+). Residue Asp153 participates in a peptide binding. 2 residues coordinate Zn(2+): Cys163 and His166. The disordered stretch occupies residues Gln842–Pro868. The interval Arg1019–Asn1054 is UBC2-binding region (U2BR). Zn(2+) contacts are provided by Cys1098, Cys1101, Cys1159, His1161, His1164, and Cys1167. Residues Cys1098–Lys1201 form an RING-type; atypical zinc finger. Residue Ser1179 is modified to Phosphoserine. The Zn(2+) site is built by Cys1197, Cys1200, Cys1627, Cys1630, and Cys1653.

This sequence belongs to the E3 ubiquitin-protein ligase UBR1-like family. As to quaternary structure, interacts with RECQL4. Broadly expressed, with highest levels in skeletal muscle, kidney and pancreas. Present in acinar cells of the pancreas (at protein level).

Its subcellular location is the cytoplasm. The protein resides in the cytosol. It catalyses the reaction S-ubiquitinyl-[E2 ubiquitin-conjugating enzyme]-L-cysteine + [acceptor protein]-L-lysine = [E2 ubiquitin-conjugating enzyme]-L-cysteine + N(6)-ubiquitinyl-[acceptor protein]-L-lysine.. The protein operates within protein modification; protein ubiquitination. Its activity is regulated as follows. Inhibited by the small-molecule compound RF-C11, which bears two heterovalent ligands: RF-C11 inhibits activity toward both type-1 and type-2 N-degrons. In terms of biological role, E3 ubiquitin-protein ligase which is a component of the N-end rule pathway. Recognizes and binds proteins bearing specific N-terminal residues that are destabilizing according to the N-end rule, leading to their ubiquitination and subsequent degradation. Recognizes both type-1 and type-2 N-degrons, containing positively charged amino acids (Arg, Lys and His) and bulky and hydrophobic amino acids, respectively. Does not ubiquitinate proteins that are acetylated at the N-terminus. In contrast, it strongly binds methylated N-degrons. Binds leucine and is a negative regulator of the leucine-mTOR signaling pathway, thereby controlling cell growth. In Homo sapiens (Human), this protein is E3 ubiquitin-protein ligase UBR1.